Consider the following 212-residue polypeptide: NAD(P)H-quinone oxidoreductase subunit K, chloroplastic (212 aa).

Residues Cys43, Cys44, Cys108, and Cys139 each coordinate [4Fe-4S] cluster.

This sequence belongs to the complex I 20 kDa subunit family. NDH is composed of at least 16 different subunits, 5 of which are encoded in the nucleus. The cofactor is [4Fe-4S] cluster.

Its subcellular location is the plastid. It localises to the chloroplast thylakoid membrane. It catalyses the reaction a plastoquinone + NADH + (n+1) H(+)(in) = a plastoquinol + NAD(+) + n H(+)(out). The enzyme catalyses a plastoquinone + NADPH + (n+1) H(+)(in) = a plastoquinol + NADP(+) + n H(+)(out). In terms of biological role, NDH shuttles electrons from NAD(P)H:plastoquinone, via FMN and iron-sulfur (Fe-S) centers, to quinones in the photosynthetic chain and possibly in a chloroplast respiratory chain. The immediate electron acceptor for the enzyme in this species is believed to be plastoquinone. Couples the redox reaction to proton translocation, and thus conserves the redox energy in a proton gradient. This is NAD(P)H-quinone oxidoreductase subunit K, chloroplastic from Phaseolus vulgaris (Kidney bean).